The sequence spans 372 residues: DNA replication and repair protein RecF (372 aa).

30-37 (GENAQGKT) serves as a coordination point for ATP.

It belongs to the RecF family.

The protein localises to the cytoplasm. Functionally, the RecF protein is involved in DNA metabolism; it is required for DNA replication and normal SOS inducibility. RecF binds preferentially to single-stranded, linear DNA. It also seems to bind ATP. In Shouchella clausii (strain KSM-K16) (Alkalihalobacillus clausii), this protein is DNA replication and repair protein RecF.